The sequence spans 434 residues: Iron transporter MagA (434 aa).

Transmembrane regions (helical) follow at residues 6–26 (PELT…GMMT), 31–51 (PAVV…FGLV), 56–76 (AVAT…GMKL), 86–106 (KTAI…ALLL), 113–133 (SLGL…AVVI), 176–196 (LLPA…LLFW), 269–289 (SVLL…KFIW), 294–314 (TVLT…VTAL), 321–341 (WPSA…SFLL), and 357–377 (KLVV…LFTM).

The protein belongs to the monovalent cation:proton antiporter 2 (CPA2) transporter (TC 2.A.37) family.

It localises to the membrane. Functionally, iron transporter, which is required for the synthesis of bacterial magnetic particles (BMPs). Probably involved in the transport of iron from the environment into the cytoplasm across the cell membrane, and then from the cytoplasm into the BMP lipid vesicle across the BMP membrane. This Paramagnetospirillum magneticum (strain ATCC 700264 / AMB-1) (Magnetospirillum magneticum) protein is Iron transporter MagA (magA).